A 130-amino-acid polypeptide reads, in one-letter code: Small ribosomal subunit protein uS11 (130 aa).

The protein belongs to the universal ribosomal protein uS11 family. In terms of assembly, part of the 30S ribosomal subunit. Interacts with proteins S7 and S18. Binds to IF-3.

In terms of biological role, located on the platform of the 30S subunit, it bridges several disparate RNA helices of the 16S rRNA. Forms part of the Shine-Dalgarno cleft in the 70S ribosome. The chain is Small ribosomal subunit protein uS11 from Xanthomonas oryzae pv. oryzae (strain MAFF 311018).